The following is a 162-amino-acid chain: Peptide deformylase (162 aa).

Fe cation-binding residues include Cys-86 and His-128. Residue Glu-129 is part of the active site. Fe cation is bound at residue His-132.

The protein belongs to the polypeptide deformylase family. Requires Fe(2+) as cofactor.

It carries out the reaction N-terminal N-formyl-L-methionyl-[peptide] + H2O = N-terminal L-methionyl-[peptide] + formate. Removes the formyl group from the N-terminal Met of newly synthesized proteins. Requires at least a dipeptide for an efficient rate of reaction. N-terminal L-methionine is a prerequisite for activity but the enzyme has broad specificity at other positions. The protein is Peptide deformylase of Treponema pallidum (strain Nichols).